The chain runs to 606 residues: Pickpocket protein 28 (606 aa).

The disordered stretch occupies residues 1 to 26 (MRTLTESRRRQSGSSGCKKDSESDDD). The next 2 helical transmembrane spans lie at 66 to 86 (IFFGLAFVLVVILSVFFISNV) and 490 to 510 (GLLGLFMGFSIFSVIEIFFYI).

This sequence belongs to the amiloride-sensitive sodium channel (TC 1.A.6) family. As to expression, expressed in water-sensing neurons in taste bristles on the proboscis but not in carbonation-sensing taste peg neurons (at protein level). Expressed in the tracheal system.

The protein localises to the cell membrane. Its function is as follows. Osmosensitive ion channel that mediates the cellular and behavioral response to water. Plays an essential role in gustatory water reception. Part of a complex that plays a role in tracheal liquid clearance. Probable role in sodium transport. The protein is Pickpocket protein 28 (ppk28) of Drosophila melanogaster (Fruit fly).